The following is a 233-amino-acid chain: ATP synthase subunit a, chloroplastic (233 aa).

Helical transmembrane passes span 27 to 47, 84 to 104, 122 to 142, and 192 to 212; these read VLLI…LGTL, VPFV…GALI, DINT…YAGF, and VLCL…GIFA.

The protein belongs to the ATPase A chain family. F-type ATPases have 2 components, CF(1) - the catalytic core - and CF(0) - the membrane proton channel. CF(1) has five subunits: alpha(3), beta(3), gamma(1), delta(1), epsilon(1). CF(0) has four main subunits: a, b, b' and c.

It is found in the plastid. The protein localises to the chloroplast thylakoid membrane. Key component of the proton channel; it plays a direct role in the translocation of protons across the membrane. The sequence is that of ATP synthase subunit a, chloroplastic from Ochrosphaera neapolitana.